Reading from the N-terminus, the 148-residue chain is Probable calcium-binding protein CML7 (148 aa).

3 consecutive EF-hand domains span residues 9–44 (EQVA…LGGN), 80–115 (PFDR…IGEK), and 116–148 (LEPH…IVAK). Ca(2+)-binding residues include D22, D24, D26, R28, E33, D93, D95, S97, T99, and D104.

In terms of biological role, potential calcium sensor. In Oryza sativa subsp. japonica (Rice), this protein is Probable calcium-binding protein CML7 (CML7).